A 282-amino-acid chain; its full sequence is V-set domain-containing T-cell activation inhibitor 1 (282 aa).

The first 24 residues, 1-24 (MASLGQILFWSIISIIIILAGAIA), serve as a signal peptide directing secretion. Over 25–259 (LIIGFGISGR…HLQLLNSKAS (235 aa)) the chain is Extracellular. 2 consecutive Ig-like V-type domains span residues 35–146 (HSIT…LEYK) and 153–241 (PEVN…IKVT). 2 disulfides stabilise this stretch: C56-C130 and C168-C225. N216 carries N-linked (GlcNAc...) asparagine glycosylation. A helical transmembrane segment spans residues 260-280 (LCVSSFFAISWALLPLSPYLM). Residues 281 to 282 (LK) lie on the Cytoplasmic side of the membrane.

It belongs to the immunoglobulin superfamily. BTN/MOG family. N-glycosylated. Overexpressed in breast, ovarian, endometrial, renal cell (RCC) and non-small-cell lung cancers (NSCLC). Expressed on activated T- and B-cells, monocytes and dendritic cells, but not expressed in most normal tissues (at protein level). Widely expressed, including in kidney, liver, lung, ovary, placenta, spleen and testis.

It localises to the cell membrane. Negatively regulates T-cell-mediated immune response by inhibiting T-cell activation, proliferation, cytokine production and development of cytotoxicity. When expressed on the cell surface of tumor macrophages, plays an important role, together with regulatory T-cells (Treg), in the suppression of tumor-associated antigen-specific T-cell immunity. Involved in promoting epithelial cell transformation. This Homo sapiens (Human) protein is V-set domain-containing T-cell activation inhibitor 1.